The sequence spans 258 residues: Thiazole synthase 2 (258 aa).

K97 functions as the Schiff-base intermediate with DXP in the catalytic mechanism. 1-deoxy-D-xylulose 5-phosphate-binding positions include G158, A184 to G185, and N206 to T207.

The protein belongs to the ThiG family. Homotetramer. Forms heterodimers with either ThiH or ThiS.

Its subcellular location is the cytoplasm. The catalysed reaction is [ThiS sulfur-carrier protein]-C-terminal-Gly-aminoethanethioate + 2-iminoacetate + 1-deoxy-D-xylulose 5-phosphate = [ThiS sulfur-carrier protein]-C-terminal Gly-Gly + 2-[(2R,5Z)-2-carboxy-4-methylthiazol-5(2H)-ylidene]ethyl phosphate + 2 H2O + H(+). Its pathway is cofactor biosynthesis; thiamine diphosphate biosynthesis. Functionally, catalyzes the rearrangement of 1-deoxy-D-xylulose 5-phosphate (DXP) to produce the thiazole phosphate moiety of thiamine. Sulfur is provided by the thiocarboxylate moiety of the carrier protein ThiS. In vitro, sulfur can be provided by H(2)S. The polypeptide is Thiazole synthase 2 (Syntrophotalea carbinolica (strain DSM 2380 / NBRC 103641 / GraBd1) (Pelobacter carbinolicus)).